Reading from the N-terminus, the 102-residue chain is Aspartyl/glutamyl-tRNA(Asn/Gln) amidotransferase subunit C (102 aa).

Belongs to the GatC family. In terms of assembly, heterotrimer of A, B and C subunits.

It carries out the reaction L-glutamyl-tRNA(Gln) + L-glutamine + ATP + H2O = L-glutaminyl-tRNA(Gln) + L-glutamate + ADP + phosphate + H(+). The enzyme catalyses L-aspartyl-tRNA(Asn) + L-glutamine + ATP + H2O = L-asparaginyl-tRNA(Asn) + L-glutamate + ADP + phosphate + 2 H(+). Functionally, allows the formation of correctly charged Asn-tRNA(Asn) or Gln-tRNA(Gln) through the transamidation of misacylated Asp-tRNA(Asn) or Glu-tRNA(Gln) in organisms which lack either or both of asparaginyl-tRNA or glutaminyl-tRNA synthetases. The reaction takes place in the presence of glutamine and ATP through an activated phospho-Asp-tRNA(Asn) or phospho-Glu-tRNA(Gln). The sequence is that of Aspartyl/glutamyl-tRNA(Asn/Gln) amidotransferase subunit C from Lactobacillus acidophilus (strain ATCC 700396 / NCK56 / N2 / NCFM).